The chain runs to 308 residues: Acetaldehyde dehydrogenase (308 aa).

Residue 10–13 coordinates NAD(+); sequence SGNI. The active-site Acyl-thioester intermediate is cysteine 128. Residues 159-167 and asparagine 285 contribute to the NAD(+) site; that span reads SAGPGTRAN.

It belongs to the acetaldehyde dehydrogenase family.

The enzyme catalyses acetaldehyde + NAD(+) + CoA = acetyl-CoA + NADH + H(+). The chain is Acetaldehyde dehydrogenase from Salinispora tropica (strain ATCC BAA-916 / DSM 44818 / JCM 13857 / NBRC 105044 / CNB-440).